The sequence spans 302 residues: Recombination-associated protein RdgC (302 aa).

This sequence belongs to the RdgC family.

It localises to the cytoplasm. Its subcellular location is the nucleoid. Its function is as follows. May be involved in recombination. This is Recombination-associated protein RdgC from Xylella fastidiosa (strain M23).